The sequence spans 426 residues: 3-phosphoshikimate 1-carboxyvinyltransferase (426 aa).

Residues K22, S23, and R27 each coordinate 3-phosphoshikimate. A phosphoenolpyruvate-binding site is contributed by K22. Phosphoenolpyruvate-binding residues include G96 and R124. 7 residues coordinate 3-phosphoshikimate: S170, S171, Q172, S198, D314, N337, and K341. Q172 contacts phosphoenolpyruvate. D314 (proton acceptor) is an active-site residue. Phosphoenolpyruvate is bound by residues R345, R387, and K412.

This sequence belongs to the EPSP synthase family. In terms of assembly, monomer.

Its subcellular location is the cytoplasm. It carries out the reaction 3-phosphoshikimate + phosphoenolpyruvate = 5-O-(1-carboxyvinyl)-3-phosphoshikimate + phosphate. It functions in the pathway metabolic intermediate biosynthesis; chorismate biosynthesis; chorismate from D-erythrose 4-phosphate and phosphoenolpyruvate: step 6/7. Catalyzes the transfer of the enolpyruvyl moiety of phosphoenolpyruvate (PEP) to the 5-hydroxyl of shikimate-3-phosphate (S3P) to produce enolpyruvyl shikimate-3-phosphate and inorganic phosphate. In Shewanella baltica (strain OS185), this protein is 3-phosphoshikimate 1-carboxyvinyltransferase.